We begin with the raw amino-acid sequence, 1014 residues long: Isoleucine--tRNA ligase (1014 aa).

The 'HIGH' region signature appears at 48-58 (PTANGRPGIHH). The 'KMSKS' region signature appears at 628–632 (KMSKS). Residue Lys-631 participates in ATP binding.

Belongs to the class-I aminoacyl-tRNA synthetase family. IleS type 2 subfamily. In terms of assembly, monomer. Zn(2+) is required as a cofactor.

The protein resides in the cytoplasm. It carries out the reaction tRNA(Ile) + L-isoleucine + ATP = L-isoleucyl-tRNA(Ile) + AMP + diphosphate. Functionally, catalyzes the attachment of isoleucine to tRNA(Ile). As IleRS can inadvertently accommodate and process structurally similar amino acids such as valine, to avoid such errors it has two additional distinct tRNA(Ile)-dependent editing activities. One activity is designated as 'pretransfer' editing and involves the hydrolysis of activated Val-AMP. The other activity is designated 'posttransfer' editing and involves deacylation of mischarged Val-tRNA(Ile). In Dehalococcoides mccartyi (strain ATCC BAA-2266 / KCTC 15142 / 195) (Dehalococcoides ethenogenes (strain 195)), this protein is Isoleucine--tRNA ligase.